Here is a 329-residue protein sequence, read N- to C-terminus: Cytosolic arginine sensor for mTORC1 subunit 2 (329 aa).

2 consecutive ACT domains span residues 72–140 (ADAT…HTLS) and 262–322 (ELWK…SALK).

It belongs to the GATS family. As to quaternary structure, forms homodimers and heterodimers with CASTOR1. Interacts with the GATOR2 complex which is composed of MIOS, SEC13, SEH1L, WDR24 and WDR59; the interaction is not regulated by arginine. Widely expressed.

It is found in the cytoplasm. It localises to the cytosol. Functionally, functions as a negative regulator of the TORC1 signaling pathway through the GATOR complex. As part of homodimers or heterodimers with CASTOR1, directly binds and inhibits the GATOR subcomplex GATOR2 and thereby mTORC1. Does not directly bind arginine, but binding of arginine to CASTOR1 disrupts the interaction of CASTOR2-containing heterodimers with GATOR2 which can in turn activate mTORC1 and the TORC1 signaling pathway. This chain is Cytosolic arginine sensor for mTORC1 subunit 2, found in Homo sapiens (Human).